A 469-amino-acid polypeptide reads, in one-letter code: Glutamine synthetase (469 aa).

The 85-residue stretch at 14 to 98 folds into the GS beta-grasp domain; the sequence is NDVKYVDLRF…VVCDVLEPTT (85 aa). In terms of domain architecture, GS catalytic spans 106 to 469; the sequence is PRGIAKKAMA…PVEFEMYYSV (364 aa). 2 residues coordinate Mg(2+): glutamate 131 and glutamate 133. Glutamate 209 lines the ATP pocket. Positions 214 and 221 each coordinate Mg(2+). L-glutamate contacts are provided by residues 265 to 266 and glycine 266; that span reads NG. Position 270 (histidine 270) interacts with Mg(2+). ATP-binding positions include 272–274 and serine 274; that span reads HQS. L-glutamate is bound by residues arginine 322, glutamate 328, and arginine 340. ATP is bound by residues arginine 340, arginine 345, and lysine 353. Glutamate 358 serves as a coordination point for Mg(2+). Arginine 360 lines the L-glutamate pocket. The residue at position 398 (tyrosine 398) is an O-AMP-tyrosine.

It belongs to the glutamine synthetase family. As to quaternary structure, oligomer of 12 subunits arranged in the form of two hexameric ring. Mg(2+) is required as a cofactor.

The protein localises to the cytoplasm. The enzyme catalyses L-glutamate + NH4(+) + ATP = L-glutamine + ADP + phosphate + H(+). Its activity is regulated as follows. The activity of this enzyme could be controlled by adenylation under conditions of abundant glutamine. In terms of biological role, catalyzes the ATP-dependent biosynthesis of glutamine from glutamate and ammonia. This is Glutamine synthetase from Azorhizobium caulinodans (strain ATCC 43989 / DSM 5975 / JCM 20966 / LMG 6465 / NBRC 14845 / NCIMB 13405 / ORS 571).